Consider the following 185-residue polypeptide: Elongation factor P (185 aa).

It belongs to the elongation factor P family.

Its subcellular location is the cytoplasm. The protein operates within protein biosynthesis; polypeptide chain elongation. Involved in peptide bond synthesis. Stimulates efficient translation and peptide-bond synthesis on native or reconstituted 70S ribosomes in vitro. Probably functions indirectly by altering the affinity of the ribosome for aminoacyl-tRNA, thus increasing their reactivity as acceptors for peptidyl transferase. The protein is Elongation factor P of Bacillus cereus (strain 03BB102).